We begin with the raw amino-acid sequence, 250 residues long: Small ribosomal subunit protein uS2 (250 aa).

It belongs to the universal ribosomal protein uS2 family.

This chain is Small ribosomal subunit protein uS2, found in Acidovorax ebreus (strain TPSY) (Diaphorobacter sp. (strain TPSY)).